The following is a 452-amino-acid chain: Pup--protein ligase (452 aa).

Glu9 contributes to the Mg(2+) binding site. Arg53 is an ATP binding site. Tyr55 contributes to the Mg(2+) binding site. The active-site Proton acceptor is Asp57. Glu63 contacts Mg(2+). The ATP site is built by Thr66 and Trp419.

The protein belongs to the Pup ligase/Pup deamidase family. Pup-conjugating enzyme subfamily.

It carries out the reaction ATP + [prokaryotic ubiquitin-like protein]-L-glutamate + [protein]-L-lysine = ADP + phosphate + N(6)-([prokaryotic ubiquitin-like protein]-gamma-L-glutamyl)-[protein]-L-lysine.. It participates in protein degradation; proteasomal Pup-dependent pathway. It functions in the pathway protein modification; protein pupylation. Catalyzes the covalent attachment of the prokaryotic ubiquitin-like protein modifier Pup to the proteasomal substrate proteins, thereby targeting them for proteasomal degradation. This tagging system is termed pupylation. The ligation reaction involves the side-chain carboxylate of the C-terminal glutamate of Pup and the side-chain amino group of a substrate lysine. The sequence is that of Pup--protein ligase from Parafrankia sp. (strain EAN1pec).